The sequence spans 247 residues: 2,3-bisphosphoglycerate-dependent phosphoglycerate mutase (247 aa).

Residues 8–15 (RHGESQWN), 21–22 (TG), Arg60, 87–90 (ERHY), Lys98, 114–115 (RR), and 183–184 (GN) each bind substrate. The active-site Tele-phosphohistidine intermediate is the His9. Glu87 (proton donor/acceptor) is an active-site residue.

This sequence belongs to the phosphoglycerate mutase family. BPG-dependent PGAM subfamily.

The enzyme catalyses (2R)-2-phosphoglycerate = (2R)-3-phosphoglycerate. Its pathway is carbohydrate degradation; glycolysis; pyruvate from D-glyceraldehyde 3-phosphate: step 3/5. In terms of biological role, catalyzes the interconversion of 2-phosphoglycerate and 3-phosphoglycerate. This chain is 2,3-bisphosphoglycerate-dependent phosphoglycerate mutase, found in Chlorobium chlorochromatii (strain CaD3).